A 404-amino-acid chain; its full sequence is Iron-sulfur assembly protein IscA2 (404 aa).

Residues 244–289 (KEEDEKKLDKLLKKRNIKKRDIVTITEEAKEELKKIISINKKENNN) adopt a coiled-coil conformation.

It belongs to the HesB/IscA family. As to quaternary structure, dimer. Homotetramer. Interacts with ABCB6.

Its subcellular location is the mitochondrion. Its pathway is cofactor biosynthesis; iron-sulfur cluster biosynthesis. Functionally, participates in iron-sulfur cluster formation (ISC) pathway for iron-sulfur (Fe-S) cluster biogenesis. Can bind and transfer [4Fe-4S] clusters to target apo-proteins. The chain is Iron-sulfur assembly protein IscA2 from Plasmodium falciparum (isolate 3D7).